A 509-amino-acid chain; its full sequence is tRNA-2-methylthio-N(6)-dimethylallyladenosine synthase (509 aa).

The segment covering 1–15 (MNEQQRLASQQVNSS) has biased composition (polar residues). The disordered stretch occupies residues 1-26 (MNEQQRLASQQVNSSTKKEEKDYSKY). Over residues 16–25 (TKKEEKDYSK) the composition is skewed to basic and acidic residues. The region spanning 66 to 184 (RKFYIRTYGC…LPYILKDAMF (119 aa)) is the MTTase N-terminal domain. [4Fe-4S] cluster is bound by residues Cys75, Cys111, Cys145, Cys221, Cys225, and Cys228. The Radical SAM core domain occupies 207-437 (RRGDIKAWVN…NALVNKLAIE (231 aa)). The TRAM domain occupies 440-503 (DRYKGQIVEV…TWSLNGELVE (64 aa)).

The protein belongs to the methylthiotransferase family. MiaB subfamily. In terms of assembly, monomer. Requires [4Fe-4S] cluster as cofactor.

The protein localises to the cytoplasm. The catalysed reaction is N(6)-dimethylallyladenosine(37) in tRNA + (sulfur carrier)-SH + AH2 + 2 S-adenosyl-L-methionine = 2-methylsulfanyl-N(6)-dimethylallyladenosine(37) in tRNA + (sulfur carrier)-H + 5'-deoxyadenosine + L-methionine + A + S-adenosyl-L-homocysteine + 2 H(+). Its function is as follows. Catalyzes the methylthiolation of N6-(dimethylallyl)adenosine (i(6)A), leading to the formation of 2-methylthio-N6-(dimethylallyl)adenosine (ms(2)i(6)A) at position 37 in tRNAs that read codons beginning with uridine. This chain is tRNA-2-methylthio-N(6)-dimethylallyladenosine synthase, found in Bacillus cereus (strain ZK / E33L).